A 32-amino-acid chain; its full sequence is Cyclotide glopa B (32 aa).

Positions 1–32 (GGSVPCIETCVWTGCFLVPGCSCKSDKKCYLN) form a cross-link, cyclopeptide (Gly-Asn). Cystine bridges form between C6–C21, C10–C23, and C15–C29.

Post-translationally, this is a cyclic peptide.

Functionally, probably participates in a plant defense mechanism. The sequence is that of Cyclotide glopa B from Gloeospermum pauciflorum.